The sequence spans 163 residues: MEQKVSADVLLNKYQTSISITKNLINSWLGNENTSVSSDEKNDDPPLQARPPRLGLGASRKDQSENSWVTSKNEKLKSLPPALKKKIERQLQKKKEAEKIEGGKNHDNLKRKLNKVGDELNEQQSDTDDDDDDSKARITSRSKRANAQSSGFDIYKKLGKKKR.

A disordered region spans residues 30–163; that stretch reads GNENTSVSSD…IYKKLGKKKR (134 aa). Basic and acidic residues predominate over residues 88–118; it reads ERQLQKKKEAEKIEGGKNHDNLKRKLNKVGD. Residues 119–133 show a composition bias toward acidic residues; the sequence is ELNEQQSDTDDDDDD. Ser125 is subject to Phosphoserine. Position 127 is a phosphothreonine (Thr127).

The protein localises to the nucleus. Its subcellular location is the nucleolus. This is an uncharacterized protein from Schizosaccharomyces pombe (strain 972 / ATCC 24843) (Fission yeast).